The sequence spans 483 residues: Cobyric acid synthase (483 aa).

Residues 248-435 enclose the GATase cobBQ-type domain; sequence VLKVVVPVLP…LHGLFETAAA (188 aa). Catalysis depends on Cys-329, which acts as the Nucleophile. His-427 is an active-site residue.

Belongs to the CobB/CobQ family. CobQ subfamily.

Its pathway is cofactor biosynthesis; adenosylcobalamin biosynthesis. Its function is as follows. Catalyzes amidations at positions B, D, E, and G on adenosylcobyrinic A,C-diamide. NH(2) groups are provided by glutamine, and one molecule of ATP is hydrogenolyzed for each amidation. The chain is Cobyric acid synthase from Pseudomonas fluorescens (strain SBW25).